Consider the following 319-residue polypeptide: Thioredoxin reductase (319 aa).

An FAD-binding site is contributed by 37–44 (ERGVPGGQ). A disulfide bridge connects residues Cys136 and Cys139. 279–288 (DVRAKSLRQI) is an FAD binding site.

Belongs to the class-II pyridine nucleotide-disulfide oxidoreductase family. Homodimer. It depends on FAD as a cofactor.

Its subcellular location is the cytoplasm. The catalysed reaction is [thioredoxin]-dithiol + NADP(+) = [thioredoxin]-disulfide + NADPH + H(+). In Listeria monocytogenes serovar 1/2a (strain ATCC BAA-679 / EGD-e), this protein is Thioredoxin reductase (trxB).